The primary structure comprises 607 residues: BTB/POZ domain-containing protein DOT3 (607 aa).

Residues 52-121 (TDLSIQVNDI…CYNLPLDLNP (70 aa)) enclose the BTB domain. In terms of domain architecture, NPH3 spans 211–487 (RCLYNDIATL…VQINTQVLFS (277 aa)). Position 428 is a phosphotyrosine (tyrosine 428). 2 disordered regions span residues 498–520 (DKLP…SRDN) and 573–607 (KSFQ…MSMS). Basic and acidic residues-rich tracts occupy residues 499–520 (KLPE…SRDN) and 577–586 (TKREDEETRE). Residues 511 to 563 (REDKRMSRDNEIIKTLKEELENVKKKMSELQSDYNELQQEYERLSSKQKSSHN) are a coiled coil.

The protein belongs to the NPH3 family. As to expression, expressed in emerging leaf primordia.

It functions in the pathway protein modification; protein ubiquitination. In terms of biological role, may act as a substrate-specific adapter of an E3 ubiquitin-protein ligase complex (CUL3-RBX1-BTB) which mediates the ubiquitination and subsequent proteasomal degradation of target proteins. Involved in leaf vasculature patterning. The chain is BTB/POZ domain-containing protein DOT3 from Arabidopsis thaliana (Mouse-ear cress).